The following is a 198-amino-acid chain: MHHRNDSQRLGKAGCPPEPSLQMANTNFLSTLSPEHCRPLAGECMNKLKCGAAEAEIMNLPERVGTFSAIPALGGISLPPGVIVMTALHSPAAASAAVTDSAFQIANLADCPQNHSSSSSSSSGGAGGANPAKKKRKRCGVCVPCKRLINCGVCSSCRNRKTGHQICKFRKCEELKKKPGTSLERTPVPSAEAFRWFF.

Residues 114-134 (NHSSSSSSSSGGAGGANPAKK) form a disordered region. A CXXC-type zinc finger spans residues 132 to 173 (AKKKRKRCGVCVPCKRLINCGVCSSCRNRKTGHQICKFRKCE). Zn(2+) contacts are provided by C139, C142, C145, C151, C154, and C157. Residues 161 to 166 (KTGHQI) are interaction with DVL1. The Zn(2+) site is built by C167 and C172.

In terms of assembly, interacts with the PDZ domain of DVL1.

It is found in the cytoplasm. In terms of biological role, acts as a negative regulator of the Wnt signaling pathway via its interaction with DVL1. Binds preferentially to DNA containing cytidine-phosphate-guanosine (CpG) dinucleotides over CpH (H=A, T, and C), hemimethylated-CpG and hemimethylated-hydroxymethyl-CpG. The chain is CXXC-type zinc finger protein 4 (CXXC4) from Homo sapiens (Human).